The following is a 43-amino-acid chain: Large ribosomal subunit protein uL5 (43 aa).

Belongs to the universal ribosomal protein uL5 family. Part of the 50S ribosomal subunit; part of the 5S rRNA/L5/L18/L25 subcomplex. Contacts the 5S rRNA and the P site tRNA. Forms a bridge to the 30S subunit in the 70S ribosome.

Functionally, this is one of the proteins that bind and probably mediate the attachment of the 5S RNA into the large ribosomal subunit, where it forms part of the central protuberance. In the 70S ribosome it contacts protein S13 of the 30S subunit (bridge B1b), connecting the 2 subunits; this bridge is implicated in subunit movement. Contacts the P site tRNA; the 5S rRNA and some of its associated proteins might help stabilize positioning of ribosome-bound tRNAs. The chain is Large ribosomal subunit protein uL5 (rplE) from Serratia marcescens.